The sequence spans 144 residues: 6-pyruvoyl tetrahydrobiopterin synthase (144 aa).

A propeptide spanning residues 1-4 is cleaved from the precursor; sequence MNAA. Residue serine 18 is modified to Phosphoserine. Residue histidine 23 participates in Zn(2+) binding. Serine 27 is subject to Phosphoserine. Cysteine 42 (proton acceptor) is an active-site residue. Zn(2+) is bound by residues histidine 48 and histidine 50. The Charge relay system role is filled by histidine 89. Phosphotyrosine is present on tyrosine 127. Catalysis depends on glutamate 133, which acts as the Charge relay system.

Belongs to the PTPS family. As to quaternary structure, homohexamer formed of two homotrimers in a head to head fashion. Zn(2+) serves as cofactor. Phosphorylation of Ser-18 is required for maximal enzyme activity.

It carries out the reaction 7,8-dihydroneopterin 3'-triphosphate = 6-pyruvoyl-5,6,7,8-tetrahydropterin + triphosphate + H(+). It participates in cofactor biosynthesis; tetrahydrobiopterin biosynthesis; tetrahydrobiopterin from 7,8-dihydroneopterin triphosphate: step 1/3. Functionally, involved in the biosynthesis of tetrahydrobiopterin, an essential cofactor of aromatic amino acid hydroxylases. Catalyzes the transformation of 7,8-dihydroneopterin triphosphate into 6-pyruvoyl tetrahydropterin. The protein is 6-pyruvoyl tetrahydrobiopterin synthase (Pts) of Rattus norvegicus (Rat).